Reading from the N-terminus, the 70-residue chain is Toxin Boma6d (70 aa).

The LCN-type CS-alpha/beta domain occupies 2–68 (RDAYIAQNYN…VPIKVEGKCH (67 aa)). 4 cysteine pairs are disulfide-bonded: Cys-12/Cys-67, Cys-16/Cys-40, Cys-22/Cys-50, and Cys-26/Cys-52.

The protein belongs to the long (4 C-C) scorpion toxin superfamily. Sodium channel inhibitor family. Alpha subfamily. In terms of tissue distribution, expressed by the venom gland.

The protein resides in the secreted. Alpha toxins bind voltage-independently at site-3 of sodium channels (Nav) and inhibit the inactivation of the activated channels, thereby blocking neuronal transmission. The chain is Toxin Boma6d from Buthus occitanus mardochei (Moroccan scorpion).